Reading from the N-terminus, the 374-residue chain is tRNA (adenine(58)-N(1))-methyltransferase catalytic subunit TRM61 (374 aa).

Residues 120-122 (SGS), E138, R143, 167-168 (DV), and D202 each bind S-adenosyl-L-methionine.

This sequence belongs to the class I-like SAM-binding methyltransferase superfamily. TRM61 family. In terms of assembly, heterotetramer; composed of two copies of TRM6 and two copies of TRM61.

The protein localises to the nucleus. It carries out the reaction adenosine(58) in tRNA + S-adenosyl-L-methionine = N(1)-methyladenosine(58) in tRNA + S-adenosyl-L-homocysteine + H(+). Catalytic subunit of tRNA (adenine-N(1)-)-methyltransferase, which catalyzes the formation of N(1)-methyladenine at position 58 (m1A58) in initiator methionyl-tRNA. The polypeptide is tRNA (adenine(58)-N(1))-methyltransferase catalytic subunit TRM61 (TRM61) (Candida glabrata (strain ATCC 2001 / BCRC 20586 / JCM 3761 / NBRC 0622 / NRRL Y-65 / CBS 138) (Yeast)).